The sequence spans 349 residues: Biotin synthase (349 aa).

The 228-residue stretch at glycine 60 to arginine 287 folds into the Radical SAM core domain. Positions 75, 79, and 82 each coordinate [4Fe-4S] cluster. [2Fe-2S] cluster contacts are provided by cysteine 119, cysteine 150, cysteine 210, and arginine 282.

The protein belongs to the radical SAM superfamily. Biotin synthase family. Homodimer. [4Fe-4S] cluster is required as a cofactor. The cofactor is [2Fe-2S] cluster.

The catalysed reaction is (4R,5S)-dethiobiotin + (sulfur carrier)-SH + 2 reduced [2Fe-2S]-[ferredoxin] + 2 S-adenosyl-L-methionine = (sulfur carrier)-H + biotin + 2 5'-deoxyadenosine + 2 L-methionine + 2 oxidized [2Fe-2S]-[ferredoxin]. It functions in the pathway cofactor biosynthesis; biotin biosynthesis; biotin from 7,8-diaminononanoate: step 2/2. Its function is as follows. Catalyzes the conversion of dethiobiotin (DTB) to biotin by the insertion of a sulfur atom into dethiobiotin via a radical-based mechanism. In Albidiferax ferrireducens (strain ATCC BAA-621 / DSM 15236 / T118) (Rhodoferax ferrireducens), this protein is Biotin synthase.